A 61-amino-acid polypeptide reads, in one-letter code: Protein TfaX (61 aa).

It belongs to the tfa family.

Might play a role in cell growth during glycolysis. This chain is Protein TfaX (tfaX), found in Escherichia coli (strain K12).